Here is a 429-residue protein sequence, read N- to C-terminus: MAKIVDIKGREVLDSRGNPTVEADVLLDNGIIGSACAPSGASTGSREALELRDGDKSRYLGKGVLKAVANINGPIRDLLLGKDPADQKALDRAMIELDGTENKAKLGANAILAVSLAAAKAAAQDLDLPLYAHIANLNGTPGQYSMPVPMMNIINGGEHADNNVDIQEFMVQPVGAKTFSDGLRMGTEIFHHLKAVLKARGLNTAVGDEGGFAPNLASNEDALGAIAEAVEKAGYKLGTDVTLALDCAASEFYEDGKYNLSGEGKSFDAEGFADYLKGLTERFPIISIEDGLDESDWAGWKILTDKIGEKVQLVGDDLFVTNTKILKEGIEKGIGNSILIKFNQIGSLTETLEAIQMAKAAGYTAVISHRSGETEDSTIADLAVGTAAGQIKTGSLCRSDRVSKYNQLLRIEEQLGAKAVYRGRAEFRG.

Gln167 is a (2R)-2-phosphoglycerate binding site. The active-site Proton donor is Glu209. Mg(2+) is bound by residues Asp246, Glu289, and Asp316. 4 residues coordinate (2R)-2-phosphoglycerate: Lys341, Arg370, Ser371, and Lys392. Lys341 acts as the Proton acceptor in catalysis.

The protein belongs to the enolase family. In terms of assembly, component of the RNA degradosome, a multiprotein complex involved in RNA processing and mRNA degradation. Mg(2+) is required as a cofactor.

Its subcellular location is the cytoplasm. The protein localises to the secreted. It localises to the cell surface. The catalysed reaction is (2R)-2-phosphoglycerate = phosphoenolpyruvate + H2O. It participates in carbohydrate degradation; glycolysis; pyruvate from D-glyceraldehyde 3-phosphate: step 4/5. In terms of biological role, catalyzes the reversible conversion of 2-phosphoglycerate (2-PG) into phosphoenolpyruvate (PEP). It is essential for the degradation of carbohydrates via glycolysis. The protein is Enolase of Pseudomonas entomophila (strain L48).